Reading from the N-terminus, the 137-residue chain is Small ribosomal subunit protein uS9 (137 aa).

Residues Asp-114 to Arg-137 are disordered. Positions Lys-118–Arg-137 are enriched in basic residues.

It belongs to the universal ribosomal protein uS9 family.

This is Small ribosomal subunit protein uS9 from Rhodopirellula baltica (strain DSM 10527 / NCIMB 13988 / SH1).